The chain runs to 500 residues: 4-aminobutyrate aminotransferase, mitochondrial (500 aa).

The N-terminal 28 residues, 1–28, are a transit peptide targeting the mitochondrion; that stretch reads MASMLVAQRLACSFQHSYRLLVPGSRHI. Position 163 (Cys-163) interacts with [2Fe-2S] cluster. 164–165 is a binding site for pyridoxal 5'-phosphate; sequence GS. A [2Fe-2S] cluster-binding site is contributed by Cys-166. Position 220 (Arg-220) interacts with substrate. The residue at position 231 (Lys-231) is an N6-succinyllysine. Lys-252 carries the N6-acetyllysine; alternate modification. Lys-252 is modified (N6-succinyllysine; alternate). N6-acetyllysine occurs at positions 279 and 318. Lys-357 is subject to N6-(pyridoxal phosphate)lysine. Thr-381 contributes to the pyridoxal 5'-phosphate binding site. Lys-413 is subject to N6-acetyllysine; alternate. Residue Lys-413 is modified to N6-succinyllysine; alternate. 2 positions are modified to N6-acetyllysine: Lys-452 and Lys-470.

Belongs to the class-III pyridoxal-phosphate-dependent aminotransferase family. Homodimer; disulfide-linked. It depends on pyridoxal 5'-phosphate as a cofactor. [2Fe-2S] cluster is required as a cofactor.

The protein localises to the mitochondrion matrix. The enzyme catalyses 4-aminobutanoate + 2-oxoglutarate = succinate semialdehyde + L-glutamate. The catalysed reaction is (S)-3-amino-2-methylpropanoate + 2-oxoglutarate = 2-methyl-3-oxopropanoate + L-glutamate. Functionally, catalyzes the conversion of gamma-aminobutyrate and L-beta-aminoisobutyrate to succinate semialdehyde and methylmalonate semialdehyde, respectively. Can also convert delta-aminovalerate and beta-alanine. This Bos taurus (Bovine) protein is 4-aminobutyrate aminotransferase, mitochondrial (ABAT).